A 261-amino-acid polypeptide reads, in one-letter code: Imidazole glycerol phosphate synthase subunit HisF (261 aa).

Active-site residues include Asp-12 and Asp-131.

Belongs to the HisA/HisF family. Heterodimer of HisH and HisF.

It is found in the cytoplasm. It catalyses the reaction 5-[(5-phospho-1-deoxy-D-ribulos-1-ylimino)methylamino]-1-(5-phospho-beta-D-ribosyl)imidazole-4-carboxamide + L-glutamine = D-erythro-1-(imidazol-4-yl)glycerol 3-phosphate + 5-amino-1-(5-phospho-beta-D-ribosyl)imidazole-4-carboxamide + L-glutamate + H(+). The protein operates within amino-acid biosynthesis; L-histidine biosynthesis; L-histidine from 5-phospho-alpha-D-ribose 1-diphosphate: step 5/9. IGPS catalyzes the conversion of PRFAR and glutamine to IGP, AICAR and glutamate. The HisF subunit catalyzes the cyclization activity that produces IGP and AICAR from PRFAR using the ammonia provided by the HisH subunit. The protein is Imidazole glycerol phosphate synthase subunit HisF of Brucella abortus (strain S19).